The following is a 266-amino-acid chain: Ciliary microtubule inner protein 4 (266 aa).

2 stretches are compositionally biased toward polar residues: residues M1 to T15 and Q24 to N38. Residues M1–S124 are disordered. Residues L47–T63 show a composition bias toward low complexity. Over residues H81–R102 the composition is skewed to basic and acidic residues.

In terms of tissue distribution, only detected in testis, in the spermatids and sperm within the seminiferous tubules (at protein level).

The protein localises to the cytoplasmic vesicle. It localises to the secretory vesicle. It is found in the acrosome. The protein resides in the cell projection. Its subcellular location is the cilium. The protein localises to the flagellum. Seems to be associated with spermiogenesis but is not essential for sperm development and male fertility. This is Ciliary microtubule inner protein 4 (Cimip4) from Mus musculus (Mouse).